Consider the following 76-residue polypeptide: Small ribosomal subunit protein bS18 (76 aa).

The protein belongs to the bacterial ribosomal protein bS18 family. As to quaternary structure, part of the 30S ribosomal subunit. Forms a tight heterodimer with protein bS6.

Its function is as follows. Binds as a heterodimer with protein bS6 to the central domain of the 16S rRNA, where it helps stabilize the platform of the 30S subunit. This Marinomonas sp. (strain MWYL1) protein is Small ribosomal subunit protein bS18.